The chain runs to 149 residues: Large ribosomal subunit protein bL9 (149 aa).

Belongs to the bacterial ribosomal protein bL9 family.

Binds to the 23S rRNA. The chain is Large ribosomal subunit protein bL9 from Tolumonas auensis (strain DSM 9187 / NBRC 110442 / TA 4).